The sequence spans 256 residues: Ubiquinone/menaquinone biosynthesis C-methyltransferase UbiE (256 aa).

S-adenosyl-L-methionine-binding positions include threonine 79, aspartate 100, and 128-129 (DA).

Belongs to the class I-like SAM-binding methyltransferase superfamily. MenG/UbiE family.

The enzyme catalyses a 2-demethylmenaquinol + S-adenosyl-L-methionine = a menaquinol + S-adenosyl-L-homocysteine + H(+). It catalyses the reaction a 2-methoxy-6-(all-trans-polyprenyl)benzene-1,4-diol + S-adenosyl-L-methionine = a 5-methoxy-2-methyl-3-(all-trans-polyprenyl)benzene-1,4-diol + S-adenosyl-L-homocysteine + H(+). Its pathway is quinol/quinone metabolism; menaquinone biosynthesis; menaquinol from 1,4-dihydroxy-2-naphthoate: step 2/2. It functions in the pathway cofactor biosynthesis; ubiquinone biosynthesis. Functionally, methyltransferase required for the conversion of demethylmenaquinol (DMKH2) to menaquinol (MKH2) and the conversion of 2-polyprenyl-6-methoxy-1,4-benzoquinol (DDMQH2) to 2-polyprenyl-3-methyl-6-methoxy-1,4-benzoquinol (DMQH2). The chain is Ubiquinone/menaquinone biosynthesis C-methyltransferase UbiE from Pseudomonas paraeruginosa (strain DSM 24068 / PA7) (Pseudomonas aeruginosa (strain PA7)).